Here is a 770-residue protein sequence, read N- to C-terminus: Pyrophosphate-energized vacuolar membrane proton pump 1 (770 aa).

Over 1 to 9 (MVAPALLPE) the chain is Intravacuolar. Residues 10–36 (LWTEILVPICAVIGIAFSLFQWYVVSR) form a helical membrane-spanning segment. At 37–88 (VKLTSDLGASSSGGANNGKNGYGDYLIEEEEGVNDQSVVAKCAEIQTAISEG) the chain is on the cytoplasmic side. A helical transmembrane segment spans residues 89-118 (ATSFLFTEYKYVGVFMIFFAAVIFVFLGSV). The Intravacuolar portion of the chain corresponds to 119–139 (EGFSTDNKPCTYDTTRTCKPA). An intrachain disulfide couples Cys-128 to Cys-136. The helical transmembrane segment at 140 to 167 (LATAAFSTIAFVLGAVTSVLSGFLGMKI) threads the bilayer. Residues 168-190 (ATYANARTTLEARKGVGKAFIVA) lie on the Cytoplasmic side of the membrane. Residues 191-220 (FRSGAVMGFLLAASGLLVLYITINVFKIYY) form a helical membrane-spanning segment. Topologically, residues 221–223 (GDD) are intravacuolar. The helical transmembrane segment at 224–252 (WEGLFEAITGYGLGGSSMALFGRVGGGIY) threads the bilayer. Topologically, residues 253 to 290 (TKAADVGADLVGKIERNIPEDDPRNPAVIADNVGDNVG) are cytoplasmic. Residue Lys-254 participates in substrate binding. The Mg(2+) site is built by Asp-257, Asp-261, and Asp-287. A helical transmembrane segment spans residues 291–316 (DIAGMGSDLFGSYAEASCAALVVASI). Over 317 to 324 (SSFGINHD) the chain is Intravacuolar. Residues 325 to 350 (FTAMCYPLLISSMGILVCLITTLFAT) form a helical membrane-spanning segment. The Cytoplasmic portion of the chain corresponds to 351–358 (DFFEIKLV). The helical transmembrane segment at 359–386 (KEIEPALKNQLIISTVIMTVGIAIVSWV) threads the bilayer. Topologically, residues 387-405 (GLPTSFTIFNFGTQKVVKN) are intravacuolar. Residues 406 to 429 (WQLFLCVCVGLWAGLIIGFVTEYY) form a helical membrane-spanning segment. Over 430–451 (TSNAYSPVQDVADSCRTGAATN) the chain is Cytoplasmic. A helical membrane pass occupies residues 452–476 (VIFGLALGYKSVIIPIFAIAISIFV). Over 477–482 (SFSFAA) the chain is Intravacuolar. A helical transmembrane segment spans residues 483 to 509 (MYGVAVAALGMLSTIATGLAIDAYGPI). At 510–538 (SDNAGGIAEMAGMSHRIRERTDALDAAGN) the chain is on the cytoplasmic side. Positions 511 and 538 each coordinate Mg(2+). A helical transmembrane segment spans residues 539 to 567 (TTAAIGKGFAIGSAALVSLALFGAFVSRA). Topologically, residues 568-577 (GIHTVDVLTP) are intravacuolar. A helical membrane pass occupies residues 578-606 (KVIIGLLVGAMLPYWFSAMTMKSVGSAAL). Topologically, residues 607 to 635 (KMVEEVRRQFNTIPGLMEGTAKPDYATCV) are cytoplasmic. A helical transmembrane segment spans residues 636–664 (KISTDASIKEMIPPGCLVMLTPLIVGFFF). Position 665 (Gly-665) is a topological domain, intravacuolar. Residues 666–693 (VETLSGVLAGSLVSGVQIAISASNTGGA) form a helical membrane-spanning segment. Over 694–736 (WDNAKKYIEAGVSEHAKSLGPKGSEPHKAAVIGDTIGDPLKDT) the chain is Cytoplasmic. The Mg(2+) site is built by Asp-695 and Asp-731. Lys-734 serves as a coordination point for substrate. Residues 737–762 (SGPSLNILIKLMAVESLVFAPFFATH) traverse the membrane as a helical segment. Residues 763–770 (GGILFKYF) are Intravacuolar-facing.

The protein belongs to the H(+)-translocating pyrophosphatase (TC 3.A.10) family. K(+)-stimulated subfamily. In terms of assembly, monomer. In terms of tissue distribution, ubiquitous (at protein level). Mostly expressed in vascular tissues, meristems and root pericycle.

The protein resides in the vacuole membrane. It localises to the endosome membrane. The protein localises to the cell membrane. The catalysed reaction is diphosphate + H2O + H(+)(in) = 2 phosphate + 2 H(+)(out). With respect to regulation, activated by K(+) and Mg(2+). Inhibited by Ca(2+), N,N'-dicyclohexylcarbodiimide (DCCD), N-ethylmaleimide (NEM) and aminomethylenediphosphonate (AMDP), and, to a lower extent, by fluoride (KF). Its function is as follows. Contributes to the transtonoplast (from cytosol to vacuole lumen) H(+)-electrochemical potential difference. It establishes a proton gradient of similar and often greater magnitude than the H(+)-ATPase on the same membrane. In addition, facilitates auxin transport by modulating apoplastic pH and regulates auxin-mediated developmental processes. Confers tolerance to NaCl and to drought by increasing ion retention. The chain is Pyrophosphate-energized vacuolar membrane proton pump 1 (AVP1) from Arabidopsis thaliana (Mouse-ear cress).